A 438-amino-acid chain; its full sequence is GTPase Der (438 aa).

EngA-type G domains lie at 4 to 168 (PIVA…NDPS) and 177 to 352 (IRIA…DNYS). Residues 10–17 (GRPNVGKS), 57–61 (DTGGI), 120–123 (NKID), 183–190 (GKPNVGKS), 230–234 (DTAGL), and 295–298 (NKWD) each bind GTP. A KH-like domain is found at 353 to 437 (KRVSTGLLND…GIEIEYRARK (85 aa)).

It belongs to the TRAFAC class TrmE-Era-EngA-EngB-Septin-like GTPase superfamily. EngA (Der) GTPase family. Associates with the 50S ribosomal subunit.

GTPase that plays an essential role in the late steps of ribosome biogenesis. This Clostridium perfringens (strain ATCC 13124 / DSM 756 / JCM 1290 / NCIMB 6125 / NCTC 8237 / Type A) protein is GTPase Der.